The sequence spans 469 residues: Dihydroorotate dehydrogenase (quinone), mitochondrial (469 aa).

The N-terminal 37 residues, 1–37, are a transit peptide targeting the mitochondrion; sequence MSSSAAALAWRRSLRDALLRGSAWRGAPAANSAAARL. A helical membrane pass occupies residues 62–82; it reads LLTGAMIGLAIAGGAYVSTAD. FMN-binding positions include 150–154 and Ser174; that span reads AGFDK. Position 154 (Lys154) interacts with substrate. Residue 199-203 coordinates substrate; sequence NRCGF. The segment at 219–247 is disordered; that stretch reads HGKRKMEETSSSTSPTTSDVKQGGKAGPG. Residues 227–236 are compositionally biased toward low complexity; the sequence is TSSSTSPTTS. Residues Asn252 and Asn283 each contribute to the FMN site. Residue 283–288 participates in substrate binding; sequence NVSSPN. Ser286 functions as the Nucleophile in the catalytic mechanism. Positions 328 and 356 each coordinate FMN. 357–358 contacts substrate; it reads NT. FMN contacts are provided by residues Gly380, Gly409, and 430-431; that span reads YT.

Belongs to the dihydroorotate dehydrogenase family. Type 2 subfamily. Requires FMN as cofactor.

It localises to the mitochondrion inner membrane. It catalyses the reaction (S)-dihydroorotate + a quinone = orotate + a quinol. The protein operates within pyrimidine metabolism; UMP biosynthesis via de novo pathway; orotate from (S)-dihydroorotate (quinone route): step 1/1. Its function is as follows. Catalyzes the conversion of dihydroorotate to orotate with quinone as electron acceptor. This is Dihydroorotate dehydrogenase (quinone), mitochondrial (PYRD) from Oryza sativa subsp. japonica (Rice).